The following is a 305-amino-acid chain: UDP-N-acetylenolpyruvoylglucosamine reductase 2 (305 aa).

The FAD-binding PCMH-type domain occupies valine 33–glycine 197. Arginine 176 is a catalytic residue. Serine 226 functions as the Proton donor in the catalytic mechanism. Glutamate 296 is a catalytic residue.

The protein belongs to the MurB family. Requires FAD as cofactor.

It localises to the cytoplasm. It catalyses the reaction UDP-N-acetyl-alpha-D-muramate + NADP(+) = UDP-N-acetyl-3-O-(1-carboxyvinyl)-alpha-D-glucosamine + NADPH + H(+). Its pathway is cell wall biogenesis; peptidoglycan biosynthesis. Cell wall formation. The chain is UDP-N-acetylenolpyruvoylglucosamine reductase 2 from Bacillus thuringiensis subsp. konkukian (strain 97-27).